Consider the following 582-residue polypeptide: Choline kinase (582 aa).

Residues 1–36 (MVQESRPGSVRSYSVGYQARSRSSSQRRHSLTRQRS) are disordered. The residue at position 30 (Ser-30) is a Phosphoserine; by PKA. Phosphoserine is present on residues Ser-48 and Ser-51. Thr-54 is subject to Phosphothreonine. At Ser-85 the chain carries Phosphoserine; by PKA.

The protein belongs to the choline/ethanolamine kinase family. Monomer. Interacts with NAP1. Mg(2+) serves as cofactor.

Its subcellular location is the cytoplasm. It carries out the reaction choline + ATP = phosphocholine + ADP + H(+). It catalyses the reaction ethanolamine + ATP = phosphoethanolamine + ADP + H(+). The protein operates within phospholipid metabolism; phosphatidylcholine biosynthesis; phosphocholine from choline: step 1/1. Catalyzes the committed step in the synthesis of phosphatidylcholine by the CDP-choline pathway. Also exhibits ethanolamine kinase activity but it is a poor substrate at 14% efficiency compared with choline. The sequence is that of Choline kinase from Saccharomyces cerevisiae (strain ATCC 204508 / S288c) (Baker's yeast).